The sequence spans 1066 residues: Isoleucine--tRNA ligase (1066 aa).

The 'HIGH' region motif lies at 49-59 (PYVSGAIHLGT). The short motif at 625–629 (KMSKS) is the 'KMSKS' region element. An ATP-binding site is contributed by Lys-628.

It belongs to the class-I aminoacyl-tRNA synthetase family. IleS type 2 subfamily. As to quaternary structure, monomer. Zn(2+) is required as a cofactor.

It localises to the cytoplasm. It catalyses the reaction tRNA(Ile) + L-isoleucine + ATP = L-isoleucyl-tRNA(Ile) + AMP + diphosphate. In terms of biological role, catalyzes the attachment of isoleucine to tRNA(Ile). As IleRS can inadvertently accommodate and process structurally similar amino acids such as valine, to avoid such errors it has two additional distinct tRNA(Ile)-dependent editing activities. One activity is designated as 'pretransfer' editing and involves the hydrolysis of activated Val-AMP. The other activity is designated 'posttransfer' editing and involves deacylation of mischarged Val-tRNA(Ile). This is Isoleucine--tRNA ligase from Pyrococcus horikoshii (strain ATCC 700860 / DSM 12428 / JCM 9974 / NBRC 100139 / OT-3).